A 336-amino-acid polypeptide reads, in one-letter code: Holliday junction branch migration complex subunit RuvB (336 aa).

The segment at 4–184 (ADRLISAGTT…FGIVQRLEFY (181 aa)) is large ATPase domain (RuvB-L). ATP contacts are provided by residues Ile-23, Arg-24, Gly-65, Lys-68, Thr-69, Thr-70, 131 to 133 (EDY), Arg-174, Tyr-184, and Arg-221. Thr-69 lines the Mg(2+) pocket. Positions 185 to 255 (QVPDLQYIVS…IAAQALDMLN (71 aa)) are small ATPAse domain (RuvB-S). The interval 258-336 (AEGFDYMDRK…HFGITPPEMP (79 aa)) is head domain (RuvB-H). DNA is bound by residues Arg-294, Arg-313, and Arg-318.

Belongs to the RuvB family. As to quaternary structure, homohexamer. Forms an RuvA(8)-RuvB(12)-Holliday junction (HJ) complex. HJ DNA is sandwiched between 2 RuvA tetramers; dsDNA enters through RuvA and exits via RuvB. An RuvB hexamer assembles on each DNA strand where it exits the tetramer. Each RuvB hexamer is contacted by two RuvA subunits (via domain III) on 2 adjacent RuvB subunits; this complex drives branch migration. In the full resolvosome a probable DNA-RuvA(4)-RuvB(12)-RuvC(2) complex forms which resolves the HJ.

It is found in the cytoplasm. It carries out the reaction ATP + H2O = ADP + phosphate + H(+). Its function is as follows. The RuvA-RuvB-RuvC complex processes Holliday junction (HJ) DNA during genetic recombination and DNA repair, while the RuvA-RuvB complex plays an important role in the rescue of blocked DNA replication forks via replication fork reversal (RFR). RuvA specifically binds to HJ cruciform DNA, conferring on it an open structure. The RuvB hexamer acts as an ATP-dependent pump, pulling dsDNA into and through the RuvAB complex. RuvB forms 2 homohexamers on either side of HJ DNA bound by 1 or 2 RuvA tetramers; 4 subunits per hexamer contact DNA at a time. Coordinated motions by a converter formed by DNA-disengaged RuvB subunits stimulates ATP hydrolysis and nucleotide exchange. Immobilization of the converter enables RuvB to convert the ATP-contained energy into a lever motion, pulling 2 nucleotides of DNA out of the RuvA tetramer per ATP hydrolyzed, thus driving DNA branch migration. The RuvB motors rotate together with the DNA substrate, which together with the progressing nucleotide cycle form the mechanistic basis for DNA recombination by continuous HJ branch migration. Branch migration allows RuvC to scan DNA until it finds its consensus sequence, where it cleaves and resolves cruciform DNA. The polypeptide is Holliday junction branch migration complex subunit RuvB (Shigella boydii serotype 18 (strain CDC 3083-94 / BS512)).